The chain runs to 652 residues: Large subunit GTPase 1 homolog (652 aa).

Ser93 is subject to Phosphoserine. The region spanning 164–438 (WRQLWRVIER…LCDCPGLVMP (275 aa)) is the CP-type G domain. 212 to 215 (NKAD) is a binding site for GTP. Phosphoserine is present on Ser252. The segment at 288-347 (LGEAASSEEDESEYEDCQEEEEDWQTCLEDSSSSDEEACGQDCKEGHTVDSEAQGRNTPQ) is disordered. Over residues 293–311 (SSEEDESEYEDCQEEEEDW) the composition is skewed to acidic residues. GTP-binding positions include 387–394 (GYPNVGKS) and 431–434 (DCPG). Residues 625–652 (RGAGKPWKKHGNRNKKEKSRRLYKHLDM) form a disordered region. A compositionally biased stretch (basic residues) spans 630 to 652 (PWKKHGNRNKKEKSRRLYKHLDM).

This sequence belongs to the TRAFAC class YlqF/YawG GTPase family. LSG1 subfamily.

It localises to the cytoplasm. It is found in the endoplasmic reticulum. Its subcellular location is the nucleus. The protein resides in the cajal body. The catalysed reaction is GTP + H2O = GDP + phosphate + H(+). Its function is as follows. Functions as a GTPase. May act by mediating the release of NMD3 from the 60S ribosomal subunit after export into the cytoplasm during the 60S ribosomal subunit maturation. The protein is Large subunit GTPase 1 homolog of Bos taurus (Bovine).